The sequence spans 311 residues: Glycosyltransferase 6 domain-containing protein 1 (311 aa).

Residues 1–5 lie on the Cytoplasmic side of the membrane; the sequence is MKAKG. Residues 6-26 form a helical; Signal-anchor for type II membrane protein membrane-spanning segment; sequence RILLLTSCLFLLLLLLAKIHL. Over 27–311 the chain is Lumenal; the sequence is RNHQEEELPL…KVAHYPTDDL (285 aa). N77 is a glycosylation site (N-linked (GlcNAc...) asparagine). Substrate is bound by residues 85–90, 176–178, and 198–201; these read FAVSSF, SVN, and HAWW. Catalysis depends on E266, which acts as the Nucleophile.

It belongs to the glycosyltransferase 6 family. It depends on Mn(2+) as a cofactor.

It localises to the membrane. In Rattus norvegicus (Rat), this protein is Glycosyltransferase 6 domain-containing protein 1 (Glt6d1).